Here is a 123-residue protein sequence, read N- to C-terminus: uncharacterized protein (123 aa).

Residues Met-1 to Gly-28 form a disordered region. Residues Lys-7–Thr-20 are compositionally biased toward basic and acidic residues.

It belongs to the TUSC2 family.

This is an uncharacterized protein from Caenorhabditis elegans.